Reading from the N-terminus, the 309-residue chain is Hydroxyacylglutathione hydrolase, mitochondrial (309 aa).

The N-terminal 24 residues, 1–24, are a transit peptide targeting the mitochondrion; that stretch reads MVLGRGSLCLRSLSVLGAACARRG. An N6-acetyllysine modification is found at Lys-90. 4 residues coordinate Zn(2+): His-103, His-105, Asp-107, and His-108. Lys-117 is modified (N6-acetyllysine). Zn(2+) contacts are provided by His-159 and Asp-183. Residues 192 to 194 and 222 to 224 contribute to the substrate site; these read KFY and HEY. His-222 contributes to the Zn(2+) binding site. Lys-230 carries the post-translational modification N6-acetyllysine; alternate. Lys-230 bears the N6-succinyllysine; alternate mark. 298-301 serves as a coordination point for substrate; sequence RREK.

This sequence belongs to the metallo-beta-lactamase superfamily. Glyoxalase II family. Monomer. Requires Zn(2+) as cofactor. As to expression, strongly expressed in testis, skeletal muscle and heart. Weakly expressed in placenta, pancreas, spleen and peripheral blood leukocytes.

It localises to the mitochondrion matrix. It is found in the cytoplasm. It carries out the reaction an S-(2-hydroxyacyl)glutathione + H2O = a 2-hydroxy carboxylate + glutathione + H(+). The enzyme catalyses (R)-S-lactoylglutathione + H2O = (R)-lactate + glutathione + H(+). Its pathway is secondary metabolite metabolism; methylglyoxal degradation; (R)-lactate from methylglyoxal: step 2/2. Thiolesterase that catalyzes the hydrolysis of S-D-lactoyl-glutathione to form glutathione and D-lactic acid. This Rattus norvegicus (Rat) protein is Hydroxyacylglutathione hydrolase, mitochondrial (Hagh).